The following is a 451-amino-acid chain: Chromosomal replication initiator protein DnaA (451 aa).

The tract at residues 1–93 (MENIDDLWNK…HNQEEEALPE (93 aa)) is domain I, interacts with DnaA modulators. A disordered region spans residues 88-108 (EEALPEQTPQTPPEKDVAGQS). The segment at 94-113 (QTPQTPPEKDVAGQSTLSQT) is domain II. The tract at residues 114-330 (MLNDKYTFNT…GALIRVVAYS (217 aa)) is domain III, AAA+ region. ATP contacts are provided by Gly158, Gly160, Lys161, and Thr162. A domain IV, binds dsDNA region spans residues 331 to 451 (SLINQDMNAD…VQAITEQLRQ (121 aa)).

Belongs to the DnaA family. As to quaternary structure, oligomerizes as a right-handed, spiral filament on DNA at oriC.

It is found in the cytoplasm. In terms of biological role, plays an essential role in the initiation and regulation of chromosomal replication. ATP-DnaA binds to the origin of replication (oriC) to initiate formation of the DNA replication initiation complex once per cell cycle. Binds the DnaA box (a 9 base pair repeat at the origin) and separates the double-stranded (ds)DNA. Forms a right-handed helical filament on oriC DNA; dsDNA binds to the exterior of the filament while single-stranded (ss)DNA is stabiized in the filament's interior. The ATP-DnaA-oriC complex binds and stabilizes one strand of the AT-rich DNA unwinding element (DUE), permitting loading of DNA polymerase. After initiation quickly degrades to an ADP-DnaA complex that is not apt for DNA replication. Binds acidic phospholipids. The sequence is that of Chromosomal replication initiator protein DnaA from Shouchella clausii (strain KSM-K16) (Alkalihalobacillus clausii).